Reading from the N-terminus, the 236-residue chain is Small ribosomal subunit protein uS3 (236 aa).

In terms of domain architecture, KH type-2 spans 39 to 107; that stretch reads IREFLTEELK…DTSLNIVEVR (69 aa). The segment at 214-236 is disordered; the sequence is ASERRAVEGDNQGSSSNRRRENA.

The protein belongs to the universal ribosomal protein uS3 family. In terms of assembly, part of the 30S ribosomal subunit. Forms a tight complex with proteins S10 and S14.

Binds the lower part of the 30S subunit head. Binds mRNA in the 70S ribosome, positioning it for translation. This chain is Small ribosomal subunit protein uS3, found in Brucella suis (strain ATCC 23445 / NCTC 10510).